Here is a 598-residue protein sequence, read N- to C-terminus: Nuclear receptor subfamily 4 group A member 1 (598 aa).

2 disordered regions span residues 1–50 (MPCI…PTAL) and 120–159 (LDETLSSSGSDYYGSPCSAPSPSTPSFQPPQLSPWDGSFG). Composition is skewed to low complexity over residues 37-50 (LASPEAAPTAPTAL) and 134-145 (SPCSAPSPSTPS). Residues 171–466 (RAWTEQLPKA…PAEGKLIFCS (296 aa)) are required for nuclear import. Residues 264 to 339 (EGRCAVCGDN…VGMVKEVVRT (76 aa)) constitute a DNA-binding region (nuclear receptor). 2 NR C4-type zinc fingers span residues 267–287 (CAVCGDNASCQHYGVRTCEGC) and 303–327 (CLANKDCPVDKRRRNRCQFCRFQKC). The segment at 268 to 354 (AVCGDNASCQ…RRGRLPSKPK (87 aa)) is required for binding NBRE-containing DNA. The interval 299–361 (AKYICLANKD…KPKQPPDASP (63 aa)) is required for the interaction with RXRA. Serine 341 is subject to Phosphoserine; by PKA. The interval 341 to 361 (SLKGRRGRLPSKPKQPPDASP) is disordered. At serine 351 the chain carries Phosphoserine; by PKA, RPS6KA1 and RPS6KA3. An NR LBD domain is found at 360–595 (SPANLLTSLV…PIVDKIFMDT (236 aa)). The segment at 521–544 (PRRVEELQNRIASCLKEHVSAVAG) is binds lipopolysaccharide. The interval 584–595 (PPPIVDKIFMDT) is AF-2.

This sequence belongs to the nuclear hormone receptor family. NR4 subfamily. In terms of assembly, binds the NGFI-B response element (NBRE) as a monomer. Binds the Nur response element (NurRE), consisting of two inverse NBRE-related octanucleotide repeats separated by 6 base-pairs, as a dimer. Interacts (via N-terminus) with NLRP3 (via LRR repeat domain); the interaction is direct, requires binding of NR4A1/Nur77 to NBRE-containing dsDNA and lipopolysaccharide, and leads to non-canonical NLRP3 inflammasome activation. Interacts with GADD45GIP1. Interacts with STK11. Heterodimer (via DNA-binding domain) with RXRA (via C-terminus); DNA-binding of the heterodimer is enhanced by 9-cis retinoic acid. Competes for the RXRA interaction with EP300 and thereby attenuates EP300 mediated acetylation of RXRA. Interacts with NCOA1. Interacts with NCOA2. Interacts with NCOA3. Zn(2+) is required as a cofactor. Post-translationally, phosphorylated at Ser-351 by RPS6KA1 and RPS6KA3 in response to mitogenic or stress stimuli. Acetylated by p300/CBP, acetylation increases stability. Deacetylated by HDAC1.

Its subcellular location is the cytoplasm. The protein localises to the cytosol. It is found in the nucleus. It localises to the mitochondrion. Functionally, orphan nuclear receptor. Binds the NGFI-B response element (NBRE) 5'-AAAGGTCA-3'. Binds 9-cis-retinoic acid outside of its ligand-binding (NR LBD) domain. Participates in energy homeostasis by sequestrating the kinase STK11 in the nucleus, thereby attenuating cytoplasmic AMPK activation. Regulates the inflammatory response in macrophages by regulating metabolic adaptations during inflammation, including repressing the transcription of genes involved in the citric acid cycle (TCA). Inhibits NF-kappa-B signaling by binding to low-affinity NF-kappa-B binding sites, such as at the IL2 promoter. May act concomitantly with NR4A2 in regulating the expression of delayed-early genes during liver regeneration. Plays a role in the vascular response to injury. Its function is as follows. In the cytosol, upon its detection of both bacterial lipopolysaccharide (LPS) and NBRE-containing mitochondrial DNA released by GSDMD pores during pyroptosis, it promotes non-canonical NLRP3 inflammasome activation by stimulating association of NLRP3 and NEK7. This Canis lupus familiaris (Dog) protein is Nuclear receptor subfamily 4 group A member 1 (NR4A1).